A 634-amino-acid polypeptide reads, in one-letter code: BTB/POZ domain-containing protein At1g03010 (634 aa).

One can recognise a BTB domain in the interval 38-103 (SDLTVQVGSS…CYGINIEINL (66 aa)). An NPH3 domain is found at 205–503 (DWWGKSLAVL…VQVLYFEQIR (299 aa)). Y444 bears the Phosphotyrosine mark. Residues 542 to 580 (RDNYASVRRENRELKLEVARMRMRLTDLEKDHISIKQEL) are a coiled coil.

The protein belongs to the NPH3 family.

The protein operates within protein modification; protein ubiquitination. May act as a substrate-specific adapter of an E3 ubiquitin-protein ligase complex (CUL3-RBX1-BTB) which mediates the ubiquitination and subsequent proteasomal degradation of target proteins. The sequence is that of BTB/POZ domain-containing protein At1g03010 from Arabidopsis thaliana (Mouse-ear cress).